The primary structure comprises 246 residues: 5-oxoprolinase subunit A (246 aa).

This sequence belongs to the LamB/PxpA family. Forms a complex composed of PxpA, PxpB and PxpC.

The enzyme catalyses 5-oxo-L-proline + ATP + 2 H2O = L-glutamate + ADP + phosphate + H(+). Its function is as follows. Catalyzes the cleavage of 5-oxoproline to form L-glutamate coupled to the hydrolysis of ATP to ADP and inorganic phosphate. The chain is 5-oxoprolinase subunit A from Cupriavidus pinatubonensis (strain JMP 134 / LMG 1197) (Cupriavidus necator (strain JMP 134)).